The chain runs to 842 residues: Protein P (842 aa).

Residues 1–177 (MPLSYQHFRR…FCGSPYTWEQ (177 aa)) form a terminal protein domain (TP) region. Residues 178 to 345 (DLQHGAFLDG…YCLSHLVNLL (168 aa)) are spacer. The tract at residues 184 to 238 (FLDGPSRVGKEPFRQQSSRIPSRSPVGPSIQSKYQQSRLGLQSQKGPLARGQQGR) is disordered. A compositionally biased stretch (low complexity) spans 197 to 208 (RQQSSRIPSRSP). Over residues 212–228 (SIQSKYQQSRLGLQSQK) the composition is skewed to polar residues. The polymerase/reverse transcriptase domain (RT) stretch occupies residues 346-689 (QDWGPCTEHG…YMNLYPVARQ (344 aa)). A Reverse transcriptase domain is found at 356–599 (EHHIRIPRTP…YSLNFMGYVI (244 aa)). Aspartate 428, aspartate 550, and aspartate 551 together coordinate Mg(2+).

This sequence belongs to the hepadnaviridae P protein family.

The catalysed reaction is DNA(n) + a 2'-deoxyribonucleoside 5'-triphosphate = DNA(n+1) + diphosphate. The enzyme catalyses Endonucleolytic cleavage to 5'-phosphomonoester.. With respect to regulation, activated by host HSP70 and HSP40 in vitro to be able to bind the epsilon loop of the pgRNA. Because deletion of the RNase H region renders the protein partly chaperone-independent, the chaperones may be needed indirectly to relieve occlusion of the RNA-binding site by this domain. Inhibited by several reverse-transcriptase inhibitors: Lamivudine, Adefovir and Entecavir. Multifunctional enzyme that converts the viral RNA genome into dsDNA in viral cytoplasmic capsids. This enzyme displays a DNA polymerase activity that can copy either DNA or RNA templates, and a ribonuclease H (RNase H) activity that cleaves the RNA strand of RNA-DNA heteroduplexes in a partially processive 3'- to 5'-endonucleasic mode. Neo-synthesized pregenomic RNA (pgRNA) are encapsidated together with the P protein, and reverse-transcribed inside the nucleocapsid. Initiation of reverse-transcription occurs first by binding the epsilon loop on the pgRNA genome, and is initiated by protein priming, thereby the 5'-end of (-)DNA is covalently linked to P protein. Partial (+)DNA is synthesized from the (-)DNA template and generates the relaxed circular DNA (RC-DNA) genome. After budding and infection, the RC-DNA migrates in the nucleus, and is converted into a plasmid-like covalently closed circular DNA (cccDNA). The activity of P protein does not seem to be necessary for cccDNA generation, and is presumably released from (+)DNA by host nuclear DNA repair machinery. This chain is Protein P, found in Hepatitis B virus genotype G (isolate IG29227/2000) (HBV-G).